We begin with the raw amino-acid sequence, 183 residues long: Protein vem-1 (183 aa).

A helical membrane pass occupies residues Phe-9–Thr-29. Residues Met-47 to Val-146 form the Cytochrome b5 heme-binding domain.

Belongs to the cytochrome b5 family. MAPR subfamily. As to quaternary structure, interacts with unc-40 (via cytoplasmic domain). As to expression, expressed in the AVG pioneer midline neuron and in several nerve ring neurons that extend projecting axons into the right ventral nerve cord.

It is found in the membrane. The protein resides in the cell projection. It localises to the axon. In terms of biological role, transmembrane protein required for the axon guidance of a subset of ventral nerve cord-associated interneurons and motor neurons. May function with the netrin receptor unc-40 in axon guidance. The sequence is that of Protein vem-1 from Caenorhabditis elegans.